The sequence spans 231 residues: GSK-3-binding protein FRAT2 (231 aa).

2 disordered regions span residues 1-24 (MPCR…DDSF) and 53-109 (DTAH…PGAV). The segment covering 7 to 23 (EEEEAGDEAEGEEDDDS) has biased composition (acidic residues). An involved in GSK-3 binding region spans residues 172-194 (DPHRLLQQLVLSGNLIKEAVRRL). Residues 203 to 231 (ATSPASAPGSGGGRSGPDSVTLQPSGAWL) are disordered.

This sequence belongs to the GSK-3-binding protein family. Binds GSK-3 and prevents GSK-3-dependent phosphorylation.

Its function is as follows. Positively regulates the Wnt signaling pathway by stabilizing beta-catenin through the association with GSK-3. This chain is GSK-3-binding protein FRAT2 (Frat2), found in Mus musculus (Mouse).